We begin with the raw amino-acid sequence, 367 residues long: MELITNVSEYEQLAKQKLPKMIYDYYASGAEDQWTLKENREAFSRILFRPRILIDVSRINMATNVLGFNISMPIMIAPSAMQKMAHPEGELATARAASAAGTIMTLSSWSTSSVEEVNSAAPGIRFFQLYVYKDRNIVRQLVRRAELAGFKAIALTVDTPRLGRREADIKNRFNLPPHLVLKNFEALDLGKMDKTNDSGLASYVASQVDRSLSWTDVKWLQTITSLPILVKGVMTAEDTRLAVESGAAGIIVSNHGARQLDYVPATISCLEEVVREAKGRLPVFLDGGVRRGTDVFKALALGASGVFIGRPVLFSLAVDGEAGVRKVLQMLRDELELTMALSGCTSLAEITRNHVITDSDRIRRSRL.

The 360-residue stretch at 1–360 (MELITNVSEY…TRNHVITDSD (360 aa)) folds into the FMN hydroxy acid dehydrogenase domain. Glyoxylate is bound at residue Y25. FMN is bound by residues 78 to 80 (PSA), S107, 128 to 130 (QLY), and T156. Glyoxylate is bound at residue Y130. R165 contacts glyoxylate. Positions 231 and 253 each coordinate FMN. Glyoxylate contacts are provided by H255 and R258. The active-site Proton acceptor is the H255. FMN is bound by residues 286 to 290 (DGGVR) and 309 to 310 (GR). Positions 365-367 (SRL) match the Microbody targeting signal motif.

The protein belongs to the FMN-dependent alpha-hydroxy acid dehydrogenase family. As to quaternary structure, homotetramer. FMN is required as a cofactor.

The protein localises to the peroxisome. It catalyses the reaction glycolate + O2 = glyoxylate + H2O2. Its pathway is photosynthesis; photorespiration; glycine from 2-phosphoglycolate: step 2/3. In terms of biological role, catalyzes the oxidation of glycolate to glyoxylate, with a reduction of O2 to H2O2. Is a key enzyme in photorespiration in green plants. The chain is Glycolate oxidase 3 (GLO3) from Oryza sativa subsp. indica (Rice).